A 305-amino-acid polypeptide reads, in one-letter code: Sulfate adenylyltransferase subunit 2 (305 aa).

Belongs to the PAPS reductase family. CysD subfamily. As to quaternary structure, heterodimer composed of CysD, the smaller subunit, and CysN.

It catalyses the reaction sulfate + ATP + H(+) = adenosine 5'-phosphosulfate + diphosphate. It participates in sulfur metabolism; hydrogen sulfide biosynthesis; sulfite from sulfate: step 1/3. With CysN forms the ATP sulfurylase (ATPS) that catalyzes the adenylation of sulfate producing adenosine 5'-phosphosulfate (APS) and diphosphate, the first enzymatic step in sulfur assimilation pathway. APS synthesis involves the formation of a high-energy phosphoric-sulfuric acid anhydride bond driven by GTP hydrolysis by CysN coupled to ATP hydrolysis by CysD. This chain is Sulfate adenylyltransferase subunit 2, found in Pseudomonas putida (strain ATCC 700007 / DSM 6899 / JCM 31910 / BCRC 17059 / LMG 24140 / F1).